Reading from the N-terminus, the 399-residue chain is Presilphiperfolan-8-beta-ol synthase (399 aa).

A disordered region spans residues 1-60 (MAIPALEPQLHDADTSSNNMSSNSTDSGYDTNSTTPLEKSEKPNTQELKQQQLDPKRPPF). Low complexity predominate over residues 15–27 (TSSNNMSSNSTDS). Positions 28 to 37 (GYDTNSTTPL) are enriched in polar residues. 3 residues coordinate Mg(2+): Asp-141, Asn-285, and Ser-289. Positions 141-145 (DDQFD) match the DDXXD motif motif. (2E,6E)-farnesyl diphosphate-binding residues include Arg-373 and Tyr-374.

Belongs to the terpene synthase family. Mg(2+) is required as a cofactor.

It carries out the reaction (2E,6E)-farnesyl diphosphate + H2O = presilphiperfolan-8beta-ol + diphosphate. Its pathway is secondary metabolite biosynthesis. Presilphiperfolan-8-beta-ol synthase; part of the gene cluster that mediates the biosynthesis of botrydial. Botrydial is necessary for colonization of plant tissue by the T4 strain. It is a strain-dependent virulence factor since highly aggressive strains like SAS56 or B05 still retain substantial virulence when botrydial synthesis is impaired, since they produce also botcinic acid. The first step of botrydial biosynthesis is performed by the sesquiterpene synthase BOT2 which catalyzes the cyclization of farnesyl diphosphate (FPP) to presilphiperfolan-8-beta-ol (PSP). The cytochrome P450 monooxygenase BOT4 then catalyzes the hydroxylation at C-4 to give a probotryane intermediate. Acetylation of the hydroxyl at C-4 is carried out by the acetyltransferase BOT5, followed by the combined action of the P450 monooxygenases BOT3 and BOT1, to yield finally the glycol, via the regio- and stereospecific hydroxylations at C-10 and C-15 of the probotryane intermediates, respectively. The cleavage of the C10-C15 bond of probotryane skeleton is an intriguing and chemically important reaction, which could be mediated by some of the monooxygenases or by a combination of them. It is possible that either BOT3 or BOT1 would oxidize either the 10- or the 15-hydroxy group to the hydroperoxide derivative, which would then undergo heterolytic fragmentation to give the dialdehyde botrydial. Finally, the dehydrogenase BOT7 might be involved in the conversion of botrydial to dihydrobotrydial. The protein is Presilphiperfolan-8-beta-ol synthase (BOT2) of Botryotinia fuckeliana (Noble rot fungus).